A 236-amino-acid chain; its full sequence is Activating transcription factor of chaperone (236 aa).

The interval 117 to 185 (HRASQLASPQ…KNAATRYRQK (69 aa)) is disordered. Residues 120 to 137 (SQLASPQHSSSSANASPR) show a composition bias toward low complexity. Over residues 162–175 (RPVDDRRSRKKEQN) the composition is skewed to basic and acidic residues. One can recognise a bZIP domain in the interval 165-228 (DDRRSRKKEQ…RYLKALMRDL (64 aa)). The segment at 167-187 (RRSRKKEQNKNAATRYRQKKK) is basic motif. The leucine-zipper stretch occupies residues 193 to 228 (LLKEEQTLRQRHTELGEKCSDLQREIRYLKALMRDL).

Belongs to the bZIP family. Binds DNA as a dimer.

It localises to the nucleus. Its function is as follows. Transcriptional activator that acts in the unfolded protein response (UPR) pathway. Acts during endoplasmic reticulum (ER) stress by activating UPR target genes via direct binding to the UPR element (UPRE) (5'-GGAACTGGACAGCGTGTCGAAA-3'). Activates expression of ER chaperones ERP72 and PDI. In Bombyx mori (Silk moth), this protein is Activating transcription factor of chaperone.